The primary structure comprises 243 residues: Exosome complex component Rrp41 (243 aa).

The protein belongs to the RNase PH family. Rrp41 subfamily. Component of the archaeal exosome complex. Forms a hexameric ring-like arrangement composed of 3 Rrp41-Rrp42 heterodimers. The hexameric ring associates with a trimer of Rrp4 and/or Csl4 subunits.

Its subcellular location is the cytoplasm. Its function is as follows. Catalytic component of the exosome, which is a complex involved in RNA degradation. Has 3'-&gt;5' exoribonuclease activity. Can also synthesize heteromeric RNA-tails. This is Exosome complex component Rrp41 from Cenarchaeum symbiosum (strain A).